Reading from the N-terminus, the 328-residue chain is Beta-ketoacyl-[acyl-carrier-protein] synthase III (328 aa).

Active-site residues include Cys114 and His253. The ACP-binding stretch occupies residues 254–258 (QANIR). Residue Asn283 is part of the active site.

This sequence belongs to the thiolase-like superfamily. FabH family. Homodimer.

The protein resides in the cytoplasm. It catalyses the reaction malonyl-[ACP] + acetyl-CoA + H(+) = 3-oxobutanoyl-[ACP] + CO2 + CoA. It functions in the pathway lipid metabolism; fatty acid biosynthesis. Its function is as follows. Catalyzes the condensation reaction of fatty acid synthesis by the addition to an acyl acceptor of two carbons from malonyl-ACP. Catalyzes the first condensation reaction which initiates fatty acid synthesis and may therefore play a role in governing the total rate of fatty acid production. Possesses both acetoacetyl-ACP synthase and acetyl transacylase activities. Its substrate specificity determines the biosynthesis of branched-chain and/or straight-chain of fatty acids. The protein is Beta-ketoacyl-[acyl-carrier-protein] synthase III of Clostridioides difficile (strain 630) (Peptoclostridium difficile).